A 144-amino-acid chain; its full sequence is Bacilliredoxin BCE33L1972 (144 aa).

This sequence belongs to the bacilliredoxin family.

This chain is Bacilliredoxin BCE33L1972, found in Bacillus cereus (strain ZK / E33L).